Here is a 166-residue protein sequence, read N- to C-terminus: Phosphopantetheine adenylyltransferase (166 aa).

Serine 10 is a binding site for substrate. Residues 10–11 and histidine 18 each bind ATP; that span reads SF. Substrate is bound by residues lysine 42, alanine 79, and arginine 93. ATP-binding positions include 94–96, glutamate 104, and 129–135; these read GLR and VRPITAT.

The protein belongs to the bacterial CoaD family. Homohexamer. It depends on Mg(2+) as a cofactor.

Its subcellular location is the cytoplasm. It catalyses the reaction (R)-4'-phosphopantetheine + ATP + H(+) = 3'-dephospho-CoA + diphosphate. Its pathway is cofactor biosynthesis; coenzyme A biosynthesis; CoA from (R)-pantothenate: step 4/5. Reversibly transfers an adenylyl group from ATP to 4'-phosphopantetheine, yielding dephospho-CoA (dPCoA) and pyrophosphate. This Methylobacterium sp. (strain 4-46) protein is Phosphopantetheine adenylyltransferase.